Consider the following 324-residue polypeptide: MSVEDGGVPGLARPRQARWTLLLFLSTAMYGAHAPFLALCHVDGRVPFRPSSAVLLTELTKLLLCAFSLLVGWQTWPQGTPPWRQAVPFALSALLYGANNNLVIYLQRYMDPSTYQVLSNLKIGSTALLYCLCLGHRLSARQGLALLLLMAAGACYASGGFQEPVNTLPGPASAAGAHPMPLHITPLGLLLLILYCLISGLSSVYTELIMKRQRLPLALQNLFLYTFGVILNFGLYAGSGPGPGFLEGFSGWAVLVVLNQAVNGLLMSAVMKHGSSITRLFIVSCSLVVNAVLSAVLLQLQLTAIFFLAALLIGLAVCLYYGSP.

Residues 1-18 (MSVEDGGVPGLARPRQAR) lie on the Cytoplasmic side of the membrane. A helical membrane pass occupies residues 19–39 (WTLLLFLSTAMYGAHAPFLAL). Residues 40 to 52 (CHVDGRVPFRPSS) lie on the Lumenal side of the membrane. The chain crosses the membrane as a helical span at residues 53-73 (AVLLTELTKLLLCAFSLLVGW). The Cytoplasmic portion of the chain corresponds to 74–85 (QTWPQGTPPWRQ). Residues 86–106 (AVPFALSALLYGANNNLVIYL) traverse the membrane as a helical segment. Over 107 to 142 (QRYMDPSTYQVLSNLKIGSTALLYCLCLGHRLSARQ) the chain is Lumenal. The helical transmembrane segment at 143–163 (GLALLLLMAAGACYASGGFQE) threads the bilayer. Topologically, residues 164 to 180 (PVNTLPGPASAAGAHPM) are cytoplasmic. A helical membrane pass occupies residues 181–201 (PLHITPLGLLLLILYCLISGL). The Lumenal portion of the chain corresponds to 202-214 (SSVYTELIMKRQR). A helical transmembrane segment spans residues 215–235 (LPLALQNLFLYTFGVILNFGL). The Cytoplasmic segment spans residues 236-248 (YAGSGPGPGFLEG). A helical transmembrane segment spans residues 249–271 (FSGWAVLVVLNQAVNGLLMSAVM). The Lumenal portion of the chain corresponds to 272–279 (KHGSSITR). A helical transmembrane segment spans residues 280-300 (LFIVSCSLVVNAVLSAVLLQL). Topologically, residues 301–324 (QLTAIFFLAALLIGLAVCLYYGSP) are cytoplasmic.

The protein belongs to the nucleotide-sugar transporter family. SLC35A subfamily. Found in a complex with SLC35A2 and SLC35A3.

It localises to the golgi apparatus membrane. It carries out the reaction CDP-L-ribitol(in) + CDP(out) = CDP-L-ribitol(out) + CDP(in). Its function is as follows. Mediates the transport of CDP-ribitol. Does not exhibit CMP-sialic acid, UDP-galactose and UDP-N-acetylglucosamine transport activity. This chain is Probable UDP-sugar transporter protein SLC35A4, found in Mus musculus (Mouse).